Here is a 203-residue protein sequence, read N- to C-terminus: Peptidyl-tRNA hydrolase (203 aa).

TRNA is bound at residue Tyr16. His21 serves as the catalytic Proton acceptor. Residues Tyr68, Asn70, and Asn116 each coordinate tRNA.

The protein belongs to the PTH family. As to quaternary structure, monomer.

Its subcellular location is the cytoplasm. The enzyme catalyses an N-acyl-L-alpha-aminoacyl-tRNA + H2O = an N-acyl-L-amino acid + a tRNA + H(+). In terms of biological role, hydrolyzes ribosome-free peptidyl-tRNAs (with 1 or more amino acids incorporated), which drop off the ribosome during protein synthesis, or as a result of ribosome stalling. Functionally, catalyzes the release of premature peptidyl moieties from peptidyl-tRNA molecules trapped in stalled 50S ribosomal subunits, and thus maintains levels of free tRNAs and 50S ribosomes. In Nostoc sp. (strain PCC 7120 / SAG 25.82 / UTEX 2576), this protein is Peptidyl-tRNA hydrolase.